The following is a 298-amino-acid chain: Inosose dehydratase (298 aa).

It belongs to the IolE/MocC family. The cofactor is glutathione. Requires Co(2+) as cofactor. Mn(2+) serves as cofactor.

The catalysed reaction is scyllo-inosose = 3D-3,5/4-trihydroxycyclohexane-1,2-dione + H2O. Functionally, catalyzes the dehydration of inosose (2-keto-myo-inositol, 2KMI or 2,4,6/3,5-pentahydroxycyclohexanone) to 3D-(3,5/4)-trihydroxycyclohexane-1,2-dione (D-2,3-diketo-4-deoxy-epi-inositol). In Histophilus somni (strain 129Pt) (Haemophilus somnus), this protein is Inosose dehydratase.